Consider the following 1330-residue polypeptide: DNA-directed RNA polymerase subunit beta'' (1330 aa).

Residues Cys-214, Cys-282, Cys-289, and Cys-292 each coordinate Zn(2+).

It belongs to the RNA polymerase beta' chain family. RpoC2 subfamily. In plastids the minimal PEP RNA polymerase catalytic core is composed of four subunits: alpha, beta, beta', and beta''. When a (nuclear-encoded) sigma factor is associated with the core the holoenzyme is formed, which can initiate transcription. Requires Zn(2+) as cofactor.

The protein localises to the plastid. Its subcellular location is the chloroplast. The catalysed reaction is RNA(n) + a ribonucleoside 5'-triphosphate = RNA(n+1) + diphosphate. Its function is as follows. DNA-dependent RNA polymerase catalyzes the transcription of DNA into RNA using the four ribonucleoside triphosphates as substrates. The polypeptide is DNA-directed RNA polymerase subunit beta'' (Physcomitrium patens (Spreading-leaved earth moss)).